The chain runs to 230 residues: Large ribosomal subunit protein uL1 (230 aa).

It belongs to the universal ribosomal protein uL1 family. Part of the 50S ribosomal subunit.

In terms of biological role, binds directly to 23S rRNA. The L1 stalk is quite mobile in the ribosome, and is involved in E site tRNA release. Its function is as follows. Protein L1 is also a translational repressor protein, it controls the translation of the L11 operon by binding to its mRNA. The chain is Large ribosomal subunit protein uL1 from Gluconobacter oxydans (strain 621H) (Gluconobacter suboxydans).